We begin with the raw amino-acid sequence, 99 residues long: UPF0729 protein CG18508 (99 aa).

Residues 60–99 (PGGKKTENVSDDDAEESENPPLNATAMAAETEVDESKKEI) form a disordered region. Acidic residues predominate over residues 68-77 (VSDDDAEESE). Ser69 is modified (phosphoserine).

It belongs to the UPF0729 family.

This is UPF0729 protein CG18508 from Drosophila melanogaster (Fruit fly).